A 184-amino-acid chain; its full sequence is Ribosome-recycling factor (184 aa).

It belongs to the RRF family.

Its subcellular location is the cytoplasm. Functionally, responsible for the release of ribosomes from messenger RNA at the termination of protein biosynthesis. May increase the efficiency of translation by recycling ribosomes from one round of translation to another. The sequence is that of Ribosome-recycling factor from Aster yellows witches'-broom phytoplasma (strain AYWB).